Here is a 320-residue protein sequence, read N- to C-terminus: Tabersonine synthase (320 aa).

Positions 78 to 80 match the Involved in the stabilization of the negatively charged intermediate by the formation of the oxyanion hole motif; the sequence is HGA. Glycine 81 contacts (-)-tabersonine. Serine 170 serves as the catalytic Proton acceptor. Residue aspartate 266 is part of the active site. Position 297 (tyrosine 297) interacts with (-)-tabersonine. Tyrosine 297 serves as the catalytic Proton donor/acceptor.

This sequence belongs to the 'GDXG' lipolytic enzyme family. In terms of assembly, interacts with dehydroprecondylocarpine acetate synthase (DPAS). In terms of tissue distribution, expressed in leaf epidermis.

The protein localises to the cytoplasm. Its subcellular location is the cytosol. The protein resides in the nucleus. The catalysed reaction is dehydrosecodine = (-)-tabersonine. The enzyme catalyses dihydroprecondylocarpine acetate = (-)-tabersonine + acetate + H(+). Its pathway is alkaloid biosynthesis. Functionally, component of iboga and aspidosperma monoterpenoid indole alkaloids (MIAs, e.g. tabersonine and catharanthine) biosynthesis pathway from 19E-geissoschizine, psychoactive compounds likely to be used in the treatment of opioid dependence. Catalyzes the conversion of dehydrosecodine to tabersonine, a precursor of vindoline; this process starts with the conversion of dihydroprecondylocarpine acetate to dehydrosecodine. This is Tabersonine synthase from Catharanthus roseus (Madagascar periwinkle).